A 478-amino-acid polypeptide reads, in one-letter code: MSVLLVGVSHRTAPVPVLERVAVTDTDRPKLTDKLLASSHISEAMIVSTCNRVEIYAVVDAFHGALAEVGELLADHSGLDLTDLHRHAYVRYSEAAAEHLFAVASGLDSMVIGEQQILGQIRTAYASSDAQQAAGRTLHELAQQALRVGKRVHSETGIDSAGASVVSVALDRAAGIVGAGGLTGRTAVVVGAGSMGGLSVAHLTRAGIGRIVVVNRTRERAEHLADTARSNGVAAEALELAELPDAMAQADVLVTCTGAVGAVVTLADTHRALAQPGRDSERPLVICDLGLPRDVEPAVSGLPGVTVLDMESLQRDPAAGAAASDADAARTIVAAELANYLAGQRLAEVTPTVTALRQRAADVVEAELMRLDSRLPGLDDPERDEVARTVRRVVDKLLHAPTVRVKQLASAPGGDSYAAALRELFELSPGSVEAVAKPTELGGADLGAIDITDGFIAGQDPRLRRFVADDNRGKESQA.

Residues 49 to 52 (TCNR), Ser109, 114 to 116 (EQQ), and Gln120 each bind substrate. Cys50 functions as the Nucleophile in the catalytic mechanism. NADP(+) is bound at residue 191-196 (GAGSMG).

This sequence belongs to the glutamyl-tRNA reductase family. In terms of assembly, homodimer.

The catalysed reaction is (S)-4-amino-5-oxopentanoate + tRNA(Glu) + NADP(+) = L-glutamyl-tRNA(Glu) + NADPH + H(+). Its pathway is porphyrin-containing compound metabolism; protoporphyrin-IX biosynthesis; 5-aminolevulinate from L-glutamyl-tRNA(Glu): step 1/2. Its function is as follows. Catalyzes the NADPH-dependent reduction of glutamyl-tRNA(Glu) to glutamate 1-semialdehyde (GSA). This is Glutamyl-tRNA reductase from Rhodococcus opacus (strain B4).